A 249-amino-acid polypeptide reads, in one-letter code: Type III pantothenate kinase (249 aa).

An ATP-binding site is contributed by 6–13; sequence DCGNSFIK. Residues Y93 and 100–103 contribute to the substrate site; that span reads GLDR. D102 (proton acceptor) is an active-site residue. D122 provides a ligand contact to K(+). Position 125 (T125) interacts with ATP. T181 contacts substrate.

It belongs to the type III pantothenate kinase family. In terms of assembly, homodimer. NH4(+) is required as a cofactor. The cofactor is K(+).

The protein resides in the cytoplasm. The enzyme catalyses (R)-pantothenate + ATP = (R)-4'-phosphopantothenate + ADP + H(+). It participates in cofactor biosynthesis; coenzyme A biosynthesis; CoA from (R)-pantothenate: step 1/5. In terms of biological role, catalyzes the phosphorylation of pantothenate (Pan), the first step in CoA biosynthesis. The protein is Type III pantothenate kinase of Pseudomonas syringae pv. syringae (strain B728a).